The primary structure comprises 287 residues: MSEIGLVKIYFGKVRDLYEIDDKRMLMVASDRLSAFDVILDDPIPSKGEILTQISNFWFKKLAHIMPNHFTGQTVYDVLPENEAKALEKRAVVAKKLTPVKVEAIVRGYLAGSGWKDYQKTGSVCGIQLPEGMQEAQQLPEVIFTPSTKAAVGDHDENISFEECGRIIGKELAEEVRAKAVRLYTEAAEYAKSRGIIICDTKFEFGLDENGTLTLMDEVLTPDSSRFWPADQYKVGTNPPSFDKQFVRDWLEQSGWNKKAPAPKVPADVIQKTVEKYREALTLLTQD.

Belongs to the SAICAR synthetase family.

The catalysed reaction is 5-amino-1-(5-phospho-D-ribosyl)imidazole-4-carboxylate + L-aspartate + ATP = (2S)-2-[5-amino-1-(5-phospho-beta-D-ribosyl)imidazole-4-carboxamido]succinate + ADP + phosphate + 2 H(+). It participates in purine metabolism; IMP biosynthesis via de novo pathway; 5-amino-1-(5-phospho-D-ribosyl)imidazole-4-carboxamide from 5-amino-1-(5-phospho-D-ribosyl)imidazole-4-carboxylate: step 1/2. The sequence is that of Phosphoribosylaminoimidazole-succinocarboxamide synthase from Neisseria meningitidis serogroup B (strain ATCC BAA-335 / MC58).